The following is a 366-amino-acid chain: Flagellar P-ring protein (366 aa).

A signal peptide spans 1-20 (MVIKFLSALILLLVTTAVQA).

The protein belongs to the FlgI family. In terms of assembly, the basal body constitutes a major portion of the flagellar organelle and consists of four rings (L,P,S, and M) mounted on a central rod.

The protein resides in the periplasm. The protein localises to the bacterial flagellum basal body. Assembles around the rod to form the L-ring and probably protects the motor/basal body from shearing forces during rotation. The chain is Flagellar P-ring protein from Escherichia coli O6:H1 (strain CFT073 / ATCC 700928 / UPEC).